A 302-amino-acid polypeptide reads, in one-letter code: Recombination-associated protein RdgC (302 aa).

Belongs to the RdgC family.

The protein localises to the cytoplasm. The protein resides in the nucleoid. Functionally, may be involved in recombination. This chain is Recombination-associated protein RdgC, found in Xylella fastidiosa (strain M23).